A 176-amino-acid polypeptide reads, in one-letter code: Lipoprotein signal peptidase (176 aa).

3 helical membrane-spanning segments follow: residues 12–32 (WYWM…WVLA), 67–87 (WQRW…TIWL), and 94–116 (MWRL…IDRL). Active-site residues include D123 and D141. Residues 137 to 157 (FNIADSAICVGAALIIIDSII) form a helical membrane-spanning segment.

It belongs to the peptidase A8 family.

The protein resides in the cell inner membrane. The enzyme catalyses Release of signal peptides from bacterial membrane prolipoproteins. Hydrolyzes -Xaa-Yaa-Zaa-|-(S,diacylglyceryl)Cys-, in which Xaa is hydrophobic (preferably Leu), and Yaa (Ala or Ser) and Zaa (Gly or Ala) have small, neutral side chains.. It participates in protein modification; lipoprotein biosynthesis (signal peptide cleavage). This protein specifically catalyzes the removal of signal peptides from prolipoproteins. This is Lipoprotein signal peptidase from Shewanella woodyi (strain ATCC 51908 / MS32).